A 550-amino-acid polypeptide reads, in one-letter code: Chaperonin GroEL (550 aa).

Residues 29-32, K50, 86-90, G416, and D498 each bind ATP; these read TAGP and DGTTT.

The protein belongs to the chaperonin (HSP60) family. As to quaternary structure, forms a cylinder of 14 subunits composed of two heptameric rings stacked back-to-back. Interacts with the co-chaperonin GroES.

It localises to the cytoplasm. The enzyme catalyses ATP + H2O + a folded polypeptide = ADP + phosphate + an unfolded polypeptide.. Its function is as follows. Together with its co-chaperonin GroES, plays an essential role in assisting protein folding. The GroEL-GroES system forms a nano-cage that allows encapsulation of the non-native substrate proteins and provides a physical environment optimized to promote and accelerate protein folding. This Anaplasma phagocytophilum (strain HZ) protein is Chaperonin GroEL.